Here is a 569-residue protein sequence, read N- to C-terminus: Hexose transporter HXT8 (569 aa).

Residues 1–38 are disordered; sequence MTDRKTNLPEEPIFEEAEDDGCPSIENSSHLSVPTVEE. Topologically, residues 1–61 are cytoplasmic; that stretch reads MTDRKTNLPE…EVVVPEKPAS (61 aa). Acidic residues predominate over residues 12–21; the sequence is PIFEEAEDDG. A helical transmembrane segment spans residues 62 to 82; sequence AYATVSIMCLCMAFGGFMSGW. Topologically, residues 83–118 are extracellular; the sequence is DTGTISGFVNQTDFLRRFGNYSHSKNTYYLSNVRTG. 2 N-linked (GlcNAc...) asparagine glycosylation sites follow: N92 and N102. A helical transmembrane segment spans residues 119 to 139; it reads LIVSIFNVGSAIGCLFLSKLG. Residues 140-145 lie on the Cytoplasmic side of the membrane; the sequence is DIYGRC. Residues 146-166 traverse the membrane as a helical segment; it reads MGLIIVIVVYMVGIVIQIASI. Topologically, residues 167 to 176 are extracellular; sequence DKWYQYFIGR. The chain crosses the membrane as a helical span at residues 177-197; it reads IIAGIGAGSISVLAPMLISET. Residues 198 to 203 lie on the Cytoplasmic side of the membrane; sequence APKHIR. The helical transmembrane segment at 204–224 threads the bilayer; the sequence is GTLLACWQLMVTFAIFLGYCT. The Extracellular segment spans residues 225 to 238; sequence NYGTKTYSNSVQWR. The helical transmembrane segment at 239–259 threads the bilayer; the sequence is VPLGLCFAWAIIMIGGMTFVP. The Cytoplasmic portion of the chain corresponds to 260–342; the sequence is ESPRFLVQVG…INSLQQLTGD (83 aa). Residues 343 to 359 form a helical membrane-spanning segment; it reads NYFFYYGTTIFKSVGMN. The Extracellular portion of the chain corresponds to 360 to 365; the sequence is DSFETS. A helical membrane pass occupies residues 366–383; sequence IVLGIVNFASCFFSLYSV. Topologically, residues 384–390 are cytoplasmic; that stretch reads DKLGRRR. Residues 391 to 411 traverse the membrane as a helical segment; the sequence is CLLLGAATMTACMVIYASVGV. Over 412-433 the chain is Extracellular; that stretch reads TRLYPNGKSEPSSKGAGNCTIV. The N-linked (GlcNAc...) asparagine glycan is linked to N429. A helical membrane pass occupies residues 434–454; it reads FTCFYIFCFSCTWGPVCYVII. Topologically, residues 455 to 471 are cytoplasmic; it reads SETFPLRVRSKCMSVAT. The chain crosses the membrane as a helical span at residues 472–492; the sequence is AANLLWGFLIGFFTPFITSAI. A topological domain (extracellular) is located at residue N493. A helical transmembrane segment spans residues 494-514; that stretch reads FYYGYVFMGCLAFSYFYVFFF. Residues 515–569 lie on the Cytoplasmic side of the membrane; sequence VPETKGLTLEEVDEMWMDGVLPWKSESWVPASRRDGDYDNEKLQHDEKPFYKRMF.

It belongs to the major facilitator superfamily. Sugar transporter (TC 2.A.1.1) family.

Its subcellular location is the membrane. In terms of biological role, probable glucose transporter. The chain is Hexose transporter HXT8 (HXT8) from Saccharomyces cerevisiae (strain ATCC 204508 / S288c) (Baker's yeast).